A 359-amino-acid chain; its full sequence is F-box protein At1g10895 (359 aa).

The region spanning 2–48 (TTMSDLDEIMVAEILCRTPMTCLKTVRSVCKKWNALSKKWFFFGKAK) is the F-box domain.

The protein is F-box protein At1g10895 of Arabidopsis thaliana (Mouse-ear cress).